A 107-amino-acid chain; its full sequence is Glutaredoxin 4 (107 aa).

The Glutaredoxin domain maps to 4–106 (LDKIKKQISE…TLLAEVAAKH (103 aa)). Residue lysine 21 coordinates glutathione. [2Fe-2S] cluster is bound at residue cysteine 29. Residues arginine 58, phenylalanine 70, and 83–84 (CD) each bind glutathione.

This sequence belongs to the glutaredoxin family. Monothiol subfamily. In terms of assembly, homodimer.

The protein localises to the cytoplasm. Functionally, monothiol glutaredoxin involved in the biogenesis of iron-sulfur clusters. The protein is Glutaredoxin 4 (grxD) of Haemophilus influenzae (strain ATCC 51907 / DSM 11121 / KW20 / Rd).